We begin with the raw amino-acid sequence, 772 residues long: Elongin-A (772 aa).

Residues 4 to 79 (ESALQVVEKL…AQWKKLVPVE (76 aa)) enclose the TFIIS N-terminal domain. 2 stretches are compositionally biased toward basic and acidic residues: residues 79–105 (ERNA…LQKE) and 136–156 (LSEL…DERK). Disordered stretches follow at residues 79 to 403 (ERNA…FEQP) and 418 to 466 (KKKK…EKPA). The residue at position 196 (serine 196) is a Phosphoserine. Basic and acidic residues-rich tracts occupy residues 226–235 (QERHLGEPHG), 253–269 (RPVD…VSRE), 275–308 (LSKE…EGSS), 321–343 (SDNH…KSKQ), and 372–384 (PEGK…DRKS). Phosphoserine is present on residues serine 384 and serine 387. At threonine 394 the chain carries Phosphothreonine. At lysine 434 the chain carries N6-acetyllysine. Basic and acidic residues predominate over residues 434–443 (KGLKKNDSKS). Serine 516 bears the Phosphoserine mark. Residues 522–681 (EAGFTGRRMN…PPRDVRRRQE (160 aa)) form an activation domain region. Residues 550–559 (TLHQQCIRVL) form a BC-box region. The F-box domain maps to 566–610 (IFEVGGVPYSVLEPVLERCTPDQLYRIEEYNHVLIEETDQLWKVH). Residues 674-732 (RDVRRRQEKFGTGGAAVPEKIKIKPAPYPMGSSHASASSISFNPSPEEPAYDGPSTSSA) form a disordered region. Over residues 705–714 (SSHASASSIS) the composition is skewed to low complexity.

As to quaternary structure, heterotrimer of an A (ELOA, ELOA2 or ELOA3P), ELOB and ELOC subunit. Part of a multisubunit ubiquitin ligase complex consisting of elongin BC complex (ELOB and ELOC), elongin A/ELOA, RBX1 and CUL5. Interacts with ERCC6; the interaction is induced by DNA damaging agents or inhibitors of RNA polymerase II elongation. Interacts (via BC-box) with CUL5.

The protein resides in the nucleus. In terms of biological role, SIII, also known as elongin, is a general transcription elongation factor that increases the RNA polymerase II transcription elongation past template-encoded arresting sites. Subunit A is transcriptionally active and its transcription activity is strongly enhanced by binding to the dimeric complex of the SIII regulatory subunits B and C (elongin BC complex). Functionally, as part of a multisubunit complex composed of elongin BC complex (ELOB and ELOC), elongin A/ELOA, RBX1 and CUL5; polyubiquitinates monoubiquitinated POLR2A. This Homo sapiens (Human) protein is Elongin-A.